Consider the following 321-residue polypeptide: MSKPIQMERGVKYRDADKMALIPVKSVAVEREQLLRKPEWMKIKLPADSSRIQGIKAAMRKNGLHSVCEEASCPNLAECFNHGTATFMILGAICTRRCPFCDVAHGRPLAPDTNEPEKLAQTIADMGLRYVVITSVDRDDLRDGGAQHFADCIHAIRAKSPQIRIETLVPDFRGRMDRALEILHDNPPDVFNHNLENIPRLYRQVRPGANYEWSLRLLQQFKQQHPQIPTKSGLMVGLGETNQEIIEVMRDLRAHGVTMLTLGQYLQPSRHHLPVQRYVSPEEFAEMKAEALAMGFTHAACGPFVRSSYHADLQAQGMEVK.

[4Fe-4S] cluster contacts are provided by Cys68, Cys73, Cys79, Cys94, Cys98, Cys101, and Ser308. Residues 80–297 (FNHGTATFMI…KAEALAMGFT (218 aa)) form the Radical SAM core domain.

The protein belongs to the radical SAM superfamily. Lipoyl synthase family. [4Fe-4S] cluster serves as cofactor.

Its subcellular location is the cytoplasm. It carries out the reaction [[Fe-S] cluster scaffold protein carrying a second [4Fe-4S](2+) cluster] + N(6)-octanoyl-L-lysyl-[protein] + 2 oxidized [2Fe-2S]-[ferredoxin] + 2 S-adenosyl-L-methionine + 4 H(+) = [[Fe-S] cluster scaffold protein] + N(6)-[(R)-dihydrolipoyl]-L-lysyl-[protein] + 4 Fe(3+) + 2 hydrogen sulfide + 2 5'-deoxyadenosine + 2 L-methionine + 2 reduced [2Fe-2S]-[ferredoxin]. Its pathway is protein modification; protein lipoylation via endogenous pathway; protein N(6)-(lipoyl)lysine from octanoyl-[acyl-carrier-protein]: step 2/2. Its function is as follows. Catalyzes the radical-mediated insertion of two sulfur atoms into the C-6 and C-8 positions of the octanoyl moiety bound to the lipoyl domains of lipoate-dependent enzymes, thereby converting the octanoylated domains into lipoylated derivatives. The protein is Lipoyl synthase of Edwardsiella ictaluri (strain 93-146).